Reading from the N-terminus, the 447-residue chain is Kynurenine 3-monooxygenase (447 aa).

Belongs to the aromatic-ring hydroxylase family. KMO subfamily. FAD serves as cofactor.

It catalyses the reaction L-kynurenine + NADPH + O2 + H(+) = 3-hydroxy-L-kynurenine + NADP(+) + H2O. It functions in the pathway cofactor biosynthesis; NAD(+) biosynthesis; quinolinate from L-kynurenine: step 1/3. In terms of biological role, catalyzes the hydroxylation of L-kynurenine (L-Kyn) to form 3-hydroxy-L-kynurenine (L-3OHKyn). Required for synthesis of quinolinic acid. The protein is Kynurenine 3-monooxygenase of Christiangramia forsetii (strain DSM 17595 / CGMCC 1.15422 / KT0803) (Gramella forsetii).